Consider the following 609-residue polypeptide: Zinc metalloproteinase/disintegrin-like HR1a (609 aa).

An N-terminal signal peptide occupies residues 1-20 (MIQVLLVTICLAVFPYQGSS). Residues 21–190 (IILGSGNVND…KKASKLVVTA (170 aa)) constitute a propeptide that is removed on maturation. In terms of domain architecture, Peptidase M12B spans 200-396 (RFIELVIVAD…DEPQCILNEP (197 aa)). Glu-203 and Asp-287 together coordinate Ca(2+). An N-linked (GlcNAc...) asparagine glycan is attached at Asn-298. 3 cysteine pairs are disulfide-bonded: Cys-311/Cys-391, Cys-351/Cys-375, and Cys-353/Cys-358. His-336 contacts Zn(2+). Glu-337 is a catalytic residue. The Zn(2+) site is built by His-340 and His-346. Asn-350 carries N-linked (GlcNAc...) asparagine glycosylation. N-linked (GlcNAc...) asparagine glycosylation is present at Asn-374. Ca(2+) is bound by residues Cys-391 and Asn-394. Residues 397-400 (LRTD) constitute a propeptide that is removed on maturation. A Disintegrin domain is found at 404–490 (PPVCGNELLE…DCPTDRFHRN (87 aa)). Val-406, Asn-409, Leu-411, Glu-413, Glu-416, and Asp-419 together coordinate Ca(2+). 22 disulfides stabilise this stretch: Cys-407–Cys-426, Cys-407–Cys-436, Cys-418–Cys-431, Cys-418–Cys-436, Cys-420–Cys-426, Cys-430–Cys-453, Cys-444–Cys-450, Cys-449–Cys-475, Cys-462–Cys-482, Cys-469–Cys-494, Cys-469–Cys-501, Cys-494–Cys-506, Cys-501–Cys-506, Cys-513–Cys-528, Cys-513–Cys-563, Cys-528–Cys-571, Cys-541–Cys-551, Cys-551–Cys-558, Cys-558–Cys-597, Cys-563–Cys-571, Cys-591–Cys-602, and Cys-597–Cys-602. The short motif at 468–470 (ECD) is the D/ECD-tripeptide element. Residues Asp-470, Glu-473, and Asp-485 each coordinate Ca(2+). Asn-520 carries an N-linked (GlcNAc...) asparagine glycan.

Belongs to the venom metalloproteinase (M12B) family. P-III subfamily. P-IIIb sub-subfamily. As to quaternary structure, monomer. Zn(2+) is required as a cofactor. In terms of tissue distribution, expressed by the venom gland.

The protein resides in the secreted. Zinc protease that induces hemorrhage and has proteolytic activity. Has preference for Ala, His, Pro, Met, and Tyr at the P1 position, in descending order (in vitro). Predominantly prefers Val and Asp at the P3 and P2 positions, respectively. Its function is as follows. Inhibits platelet aggregation induced by ADP, thrombin, platelet-activating factor and collagen. Acts by inhibiting fibrinogen interaction with platelet receptors alpha-IIb/beta-3 (ITGA2B/ITGB3). The protein is Zinc metalloproteinase/disintegrin-like HR1a of Protobothrops flavoviridis (Habu).